A 202-amino-acid polypeptide reads, in one-letter code: Translation initiation factor 2 subunit beta (202 aa).

A TRAM domain is found at 145 to 202 (AIEEGGTYELRIDAVGSKGDGIAKIDKYTVFVPGATKGDVVKVKIKKISGNLAFSERA).

Belongs to the eIF-2-beta/eIF-5 family. In terms of assembly, heterotrimer composed of an alpha, a beta and a gamma chain.

Functionally, eIF-2 functions in the early steps of protein synthesis by forming a ternary complex with GTP and initiator tRNA. The sequence is that of Translation initiation factor 2 subunit beta (eif2b) from Methanosarcina mazei (strain ATCC BAA-159 / DSM 3647 / Goe1 / Go1 / JCM 11833 / OCM 88) (Methanosarcina frisia).